The primary structure comprises 268 residues: Fc receptor-like protein 6 (268 aa).

The N-terminal stretch at 1-16 is a signal peptide; that stretch reads MLLWMVLLLCESMAEA. Topologically, residues 17–215 are extracellular; that stretch reads QELFPNPELT…TAWIKSNMLP (199 aa). The region spanning 114–194 is the Ig-like C2-type domain; sequence PVLTLQHEAT…AKNNISREIS (81 aa). An intrachain disulfide couples cysteine 135 to cysteine 183. N-linked (GlcNAc...) asparagine glycosylation is found at asparagine 180 and asparagine 188. The helical transmembrane segment at 216–236 threads the bilayer; sequence IWLPASLLGGMVIAAVVLMYF. Residues 237–268 are Cytoplasmic-facing; that stretch reads FKPCKKHARPETPTLKEPDSFLYVSVDNQRYK.

In terms of assembly, interacts with class II MHC.

It localises to the cell membrane. In terms of biological role, acts as a MHC class II receptor. When stimulated on its own, does not play a role in cytokine production or the release of cytotoxic granules by NK cells and cytotoxic CD8(+) T cells. Does not act as an Fc receptor. The sequence is that of Fc receptor-like protein 6 (Fcrl6) from Mus musculus (Mouse).